A 64-amino-acid polypeptide reads, in one-letter code: Metallothionein-like protein 1 (64 aa).

The protein belongs to the metallothionein superfamily. Type 15 family.

Metallothioneins have a high content of cysteine residues that bind various heavy metals. This chain is Metallothionein-like protein 1 (MT1), found in Prunus avium (Cherry).